We begin with the raw amino-acid sequence, 870 residues long: MASASSSRAGVALPFEKSQLTLKVVSAKPKVHNRQPRINSYVEVAVDGLPSETKKTGKRIGSSELLWNEIIVLNVTAQSHLDLKVWSCHTLRNELLGTASVNLSNVLKNNGGKMENTQLTLNLQTENKGSVVSGGELTIFLDGPTVDLGSVPNGSAVTDGSQPPSRESSGTAIAPETRHQPPSTNCFGGRSRTHRHSGGSARTATAASEQSPGARNRHRQPVKNSSSSGLANGTVNEEPTPASEPEESSVVGVTSLPAAALSVSSNPNTTSLPAQSTPAEGEEASTSGTQQLPAAAQAPDALPAGWEQRELPNGRVYYVDHNTKTTTWERPLPPGWEKRTDPRGRFYYVDHNTRTTTWQRPTAEYVRNYEQWQSQRNQLQGAMQHFSQRFLYQSSSASTDHDPLGPLPPGWEKRQDNGRVYYVNHNTRTTQWEDPRTQGMIQEPALPPGWEMKYTSEGVRYFVDHNTRTTTFKDPRPGFESGTKQGSPGAYDRSFRWKYHQFRFLCHSNALPSHVKISVSRQTLFEDSFQQIMNMKPYDLRRRLYIIMRGEEGLDYGGIAREWFFLLSHEVLNPMYCLFEYAGKNNYCLQINPASSINPDHLTYFRFIGRFIAMALYHGKFIDTGFTLPFYKRMLNKRPTLKDLESIDPEFYNSIVWIKENNLEECGLELFFIQDMEILGKVTTHELKEGGENIRVTEENKEEYIMLLTDWRFTRGVEEQTKAFLDGFNEVAPLEWLRYFDEKELELMLCGMQEIDMSDWQKNAIYRHYTKSSKQIQWFWQVVKEMDNEKRIRLLQFVTGTCRLPVGGFAELIGSNGPQKFCIDRVGKETWLPRSHTCFNRLDLPPYKSYEQLKEKLLYAIEETEGFGQE.

The region spanning 1-117 (MASASSSRAG…KNNGGKMENT (117 aa)) is the C2 domain. Residues 150 to 300 (SVPNGSAVTD…QLPAAAQAPD (151 aa)) are disordered. Residues 152-171 (PNGSAVTDGSQPPSRESSGT) are compositionally biased toward polar residues. The span at 198–208 (GGSARTATAAS) shows a compositional bias: low complexity. Ser211 is modified (phosphoserine). Polar residues-rich tracts occupy residues 222 to 235 (VKNS…NGTV) and 262 to 289 (SVSS…TSGT). Residues 290–300 (QQLPAAAQAPD) show a composition bias toward low complexity. WW domains are found at residues 300–333 (DALP…RPLP), 330–363 (RPLP…RPTA), 405–437 (GPLP…DPRT), and 444–477 (PALP…DPRP). Residues 536–870 (KPYDLRRRLY…IEETEGFGQE (335 aa)) form the HECT domain. Cys838 functions as the Glycyl thioester intermediate in the catalytic mechanism.

In terms of assembly, interacts with SCNN1A, SCNN1B, SCNN1G, WBP1, WBP2 and ATN1. Interacts with ERBB4, NDFIP1 and NDFIP2. Interacts with ARRDC4. Interacts with POU5F1, RBP1, EGR2 and SLC11A2. Interacts (via WW domains) with ARRDC1 (via PPxY motifs); ubiquitinates ARRDC1. Interacts (via WW domains) with ARRDC2 and ARRDC3. In terms of processing, autoubiquitinated. Ubiquitinated by the SCF(FBXL15) complex, leading to its degradation by the proteasome.

Its subcellular location is the nucleus. It carries out the reaction S-ubiquitinyl-[E2 ubiquitin-conjugating enzyme]-L-cysteine + [acceptor protein]-L-lysine = [E2 ubiquitin-conjugating enzyme]-L-cysteine + N(6)-ubiquitinyl-[acceptor protein]-L-lysine.. It functions in the pathway protein modification; protein ubiquitination. Activated by NDFIP1- and NDFIP2-binding. Functionally, E3 ubiquitin-protein ligase which accepts ubiquitin from an E2 ubiquitin-conjugating enzyme in the form of a thioester and then directly transfers the ubiquitin to targeted substrates. Polyubiquitinates POU5F1 by 'Lys-63'-linked conjugation and promotes it to proteasomal degradation; regulates POU5F1 protein level during differentiation of embryonal carcinoma cells (ECCs) but not in undifferentiated ECCs and embryonic stem cells (ESCs). Ubiquitinates EGR2 and promotes it to proteasomal degradation; in T-cells the ubiquitination inhibits activation-induced cell death. Ubiquitinates SLC11A2; the ubiquitination is enhanced by presence of NDFIP1 and NDFIP2. Ubiquitinates RPB1 and promotes it to proteasomal degradation. This is NEDD4-like E3 ubiquitin-protein ligase WWP2 (Wwp2) from Mus musculus (Mouse).